Here is a 203-residue protein sequence, read N- to C-terminus: Translation initiation factor IF-3 (203 aa).

The protein belongs to the IF-3 family. In terms of assembly, monomer.

Its subcellular location is the cytoplasm. In terms of biological role, IF-3 binds to the 30S ribosomal subunit and shifts the equilibrium between 70S ribosomes and their 50S and 30S subunits in favor of the free subunits, thus enhancing the availability of 30S subunits on which protein synthesis initiation begins. The chain is Translation initiation factor IF-3 from Corynebacterium efficiens (strain DSM 44549 / YS-314 / AJ 12310 / JCM 11189 / NBRC 100395).